Here is a 726-residue protein sequence, read N- to C-terminus: L-lysine 6-oxidase (726 aa).

A cross-link (4'-cysteinyl-tryptophylquinone (Cys-Trp)) is located at residues 516–581 (CTIQTVNFSE…LPPAYYSYWW (66 aa)). The residue at position 581 (Trp581) is a Tryptophylquinone.

In terms of assembly, homotetramer. It depends on cysteine tryptophylquinone residue as a cofactor. The cysteine tryptophylquinone (CTQ) is generated by oxidation of the indole ring of a tryptophan residue to form tryptophylquinone, followed by covalent cross-linking with a cysteine residue.

Its subcellular location is the secreted. It carries out the reaction L-lysine + O2 + H2O = (S)-2-amino-6-oxohexanoate + H2O2 + NH4(+). Its activity is regulated as follows. Inhibited by aminoguanidine, amiloride and beta-aminopropionitrile. In terms of biological role, has antibacterial activity against a wide spectrum of Gram-positive and Gram-negative bacteria including nosocomial isolates of S.aureus and Pseudomonas sp. The antimicrobial activity is due to hydrogen peroxide generated by its lysine oxidase activity. Also has autotoxic activity. Involved in biofilm differentiation; responsible for cell death within microcolonies during biofilm development which is linked to the generation of a phenotypically diverse dispersal population and thus may play a role in colonization. This is L-lysine 6-oxidase (lodA) from Marinomonas mediterranea (strain ATCC 700492 / JCM 21426 / NBRC 103028 / MMB-1).